We begin with the raw amino-acid sequence, 175 residues long: Ribulose bisphosphate carboxylase small subunit, chloroplastic (175 aa).

Residues 1–46 constitute a chloroplast transit peptide; the sequence is MAPTVMASSATSVAPFQGLKSTAGLPVSRRSNGASLGSVSNGGRIR.

It belongs to the RuBisCO small chain family. Heterohexadecamer of 8 large and 8 small subunits.

It is found in the plastid. Its subcellular location is the chloroplast. Its function is as follows. RuBisCO catalyzes two reactions: the carboxylation of D-ribulose 1,5-bisphosphate, the primary event in carbon dioxide fixation, as well as the oxidative fragmentation of the pentose substrate. Both reactions occur simultaneously and in competition at the same active site. Although the small subunit is not catalytic it is essential for maximal activity. The sequence is that of Ribulose bisphosphate carboxylase small subunit, chloroplastic from Aegilops tauschii (Tausch's goatgrass).